A 272-amino-acid chain; its full sequence is 5'-AMP-activated protein kinase subunit beta-2 (272 aa).

Residues 1-52 (MGNTTSDRVSGERHGAKAARSEGAGGHAPGKEHKIMVGSTDDPSVFSLPDSK) are disordered. Ser39 bears the Phosphoserine mark. Thr40 is modified (phosphothreonine). Ser69 carries the post-translational modification Phosphoserine; by ULK1. 2 positions are modified to phosphoserine: Ser95 and Ser108. Thr148 is modified (phosphothreonine). A phosphoserine mark is found at Ser158, Ser170, Ser174, and Ser184.

The protein belongs to the 5'-AMP-activated protein kinase beta subunit family. AMPK is a heterotrimer of an alpha catalytic subunit (PRKAA1 or PRKAA2), a beta (PRKAB1 or PRKAB2) and a gamma non-catalytic subunits (PRKAG1, PRKAG2 or PRKAG3). Phosphorylated when associated with the catalytic subunit (PRKAA1 or PRKAA2). Phosphorylated by ULK1 and ULK2; leading to negatively regulate AMPK activity and suggesting the existence of a regulatory feedback loop between ULK1, ULK2 and AMPK.

Non-catalytic subunit of AMP-activated protein kinase (AMPK), an energy sensor protein kinase that plays a key role in regulating cellular energy metabolism. In response to reduction of intracellular ATP levels, AMPK activates energy-producing pathways and inhibits energy-consuming processes: inhibits protein, carbohydrate and lipid biosynthesis, as well as cell growth and proliferation. AMPK acts via direct phosphorylation of metabolic enzymes, and by longer-term effects via phosphorylation of transcription regulators. Also acts as a regulator of cellular polarity by remodeling the actin cytoskeleton; probably by indirectly activating myosin. Beta non-catalytic subunit acts as a scaffold on which the AMPK complex assembles, via its C-terminus that bridges alpha (PRKAA1 or PRKAA2) and gamma subunits (PRKAG1, PRKAG2 or PRKAG3). This Homo sapiens (Human) protein is 5'-AMP-activated protein kinase subunit beta-2 (PRKAB2).